A 570-amino-acid chain; its full sequence is Sulfite reductase [NADPH] hemoprotein beta-component (570 aa).

[4Fe-4S] cluster-binding residues include Cys434, Cys440, Cys479, and Cys483. Residue Cys483 coordinates siroheme.

Belongs to the nitrite and sulfite reductase 4Fe-4S domain family. Alpha(8)-beta(8). The alpha component is a flavoprotein, the beta component is a hemoprotein. Siroheme is required as a cofactor. [4Fe-4S] cluster serves as cofactor.

It catalyses the reaction hydrogen sulfide + 3 NADP(+) + 3 H2O = sulfite + 3 NADPH + 4 H(+). Its pathway is sulfur metabolism; hydrogen sulfide biosynthesis; hydrogen sulfide from sulfite (NADPH route): step 1/1. In terms of biological role, component of the sulfite reductase complex that catalyzes the 6-electron reduction of sulfite to sulfide. This is one of several activities required for the biosynthesis of L-cysteine from sulfate. The polypeptide is Sulfite reductase [NADPH] hemoprotein beta-component (Shigella sonnei (strain Ss046)).